A 324-amino-acid polypeptide reads, in one-letter code: Clavaminate synthase 1 (324 aa).

His-144, Glu-146, and His-279 together coordinate Fe cation. A 2-oxoglutarate-binding site is contributed by Arg-293.

This sequence belongs to the clavaminate synthase family. Fe(2+) serves as cofactor.

The catalysed reaction is deoxyamidinoproclavaminate + 2-oxoglutarate + O2 = amidinoproclavaminate + succinate + CO2. The enzyme catalyses proclavaminate + 2-oxoglutarate + O2 = dihydroclavaminate + succinate + CO2 + H2O. It catalyses the reaction dihydroclavaminate + 2-oxoglutarate + O2 = clavaminate + succinate + CO2 + H2O. It participates in antibiotic biosynthesis; clavulanate biosynthesis; clavulanate from D-glyceraldehyde 3-phosphate and L-arginine: step 3/8. It functions in the pathway antibiotic biosynthesis; clavulanate biosynthesis; clavulanate from D-glyceraldehyde 3-phosphate and L-arginine: step 5/8. Its pathway is antibiotic biosynthesis; clavulanate biosynthesis; clavulanate from D-glyceraldehyde 3-phosphate and L-arginine: step 6/8. This chain is Clavaminate synthase 1 (cs1), found in Streptomyces clavuligerus.